Here is a 406-residue protein sequence, read N- to C-terminus: MKVSFFLLKFPLSSETFVLNQITAFIDMGHEVEIVALQKGDTQHTHAAWEKYGLAAKTRWLQDEPQGRLAKLRYRACKTLPGLHRAATWKALNFTRYGDESRNLILSAICAQVSQPFVADVFIAHFGPAGVTAAKLRELGVLRGKIATIFHGIDISSREVLSHYTPEYQQLFRRGDLMLPISDLWAGRLKSMGCPPEKIAVSRMGVDMTRFTHRSVKAPGMPLEMISVARLTEKKGLHVAIEACRQLKAQGVAFRYRILGIGPWERRLRTLIEQYQLEDVIEMPGFKPSHEVKAMLDDADVFLLPSITGTDGDMEGIPVALMEAMAVGIPVVSTVHSGIPELVEAGKSGWLVPENDAQALAARLAEFSRIDHDTLESVITRAREKVAQDFNQQAINRQLASLLQTI.

It belongs to the glycosyltransferase group 1 family. Glycosyltransferase 4 subfamily.

It functions in the pathway slime biogenesis; slime polysaccharide biosynthesis. This chain is Putative colanic acid biosynthesis glycosyltransferase WcaL (wcaL), found in Salmonella typhimurium (strain LT2 / SGSC1412 / ATCC 700720).